An 815-amino-acid polypeptide reads, in one-letter code: Translation initiation factor IF-2 (815 aa).

One can recognise a tr-type G domain in the interval 315–482 (ARPPVVTIMG…AISLTAEVLE (168 aa)). A G1 region spans residues 324-331 (GHVDHGKT). 324 to 331 (GHVDHGKT) contacts GTP. The segment at 349-353 (GITQH) is G2. Residues 370–373 (DTPG) form a G3 region. Residues 370–374 (DTPGH) and 424–427 (NKID) each bind GTP. The tract at residues 424–427 (NKID) is G4. The interval 460–462 (SAY) is G5.

It belongs to the TRAFAC class translation factor GTPase superfamily. Classic translation factor GTPase family. IF-2 subfamily.

The protein localises to the cytoplasm. In terms of biological role, one of the essential components for the initiation of protein synthesis. Protects formylmethionyl-tRNA from spontaneous hydrolysis and promotes its binding to the 30S ribosomal subunits. Also involved in the hydrolysis of GTP during the formation of the 70S ribosomal complex. The protein is Translation initiation factor IF-2 of Ruthia magnifica subsp. Calyptogena magnifica.